Here is a 271-residue protein sequence, read N- to C-terminus: L-aspartate dehydrogenase (271 aa).

NAD(+) is bound by residues A124 and N192. H222 is an active-site residue.

The protein belongs to the L-aspartate dehydrogenase family.

It carries out the reaction L-aspartate + NADP(+) + H2O = oxaloacetate + NH4(+) + NADPH + H(+). The enzyme catalyses L-aspartate + NAD(+) + H2O = oxaloacetate + NH4(+) + NADH + H(+). It functions in the pathway cofactor biosynthesis; NAD(+) biosynthesis; iminoaspartate from L-aspartate (dehydrogenase route): step 1/1. In terms of biological role, specifically catalyzes the NAD or NADP-dependent dehydrogenation of L-aspartate to iminoaspartate. The chain is L-aspartate dehydrogenase from Methanosarcina acetivorans (strain ATCC 35395 / DSM 2834 / JCM 12185 / C2A).